Consider the following 230-residue polypeptide: 3-beta-hydroxysteroid-Delta(8),Delta(7)-isomerase (230 aa).

An N-acetylthreonine modification is found at Thr2. The next 4 helical transmembrane spans lie at 29–49 (WHIL…TWLL), 66–86 (LCWF…FVLY), 121–141 (METI…IAFL), and 185–205 (FWFY…VLVL). The 144-residue stretch at 61 to 204 (WRRLSLCWFA…LWLVLPGVLV (144 aa)) folds into the EXPERA domain.

It belongs to the EBP family.

The protein localises to the endoplasmic reticulum membrane. The protein resides in the nucleus envelope. It is found in the cytoplasmic vesicle. It carries out the reaction lathosterol = 5alpha-cholest-8-en-3beta-ol. The catalysed reaction is zymosterol = 5alpha-cholesta-7,24-dien-3beta-ol. The enzyme catalyses 5,6alpha-epoxy-5alpha-cholestan-3beta-ol + H2O = 5alpha-cholestane-3beta,5,6beta-triol. It catalyses the reaction 5,6beta-epoxy-5beta-cholestan-3beta-ol + H2O = 5alpha-cholestane-3beta,5,6beta-triol. It functions in the pathway steroid biosynthesis; cholesterol biosynthesis. Its activity is regulated as follows. Cholestenol Delta-isomerase and cholesterol-5,6-epoxide hydrolase (ChEH) activities are inhibited by tamoxifen and the selective AEBS ligand (4-benzyl-phenoxy)-ethyl-N-pyrrolidine (PBPE). ChEH activity is inhibited by oleic acid. Its function is as follows. Isomerase that catalyzes the conversion of Delta(8)-sterols to their corresponding Delta(7)-isomers a catalytic step in the postlanosterol biosynthesis of cholesterol. Component of the microsomal antiestrogen binding site (AEBS), a multiproteic complex at the ER membrane that consists of an association between EBP and 7-dehydrocholesterol reductase/DHCR7. This complex is responsible for cholesterol-5,6-epoxide hydrolase (ChEH) activity, which consists in the hydration of cholesterol-5,6-epoxides (5,6-EC) into cholestane-3beta,5alpha,6beta-triol (CT). The precise role of each component of this complex has not been described yet. The sequence is that of 3-beta-hydroxysteroid-Delta(8),Delta(7)-isomerase from Homo sapiens (Human).